Here is a 413-residue protein sequence, read N- to C-terminus: Arginine biosynthesis bifunctional protein ArgJ (413 aa).

The substrate site is built by Thr-158, Lys-184, Thr-195, Glu-285, Asn-408, and Ser-413. Residue Thr-195 is the Nucleophile of the active site.

It belongs to the ArgJ family. In terms of assembly, heterotetramer of two alpha and two beta chains.

It localises to the cytoplasm. It catalyses the reaction N(2)-acetyl-L-ornithine + L-glutamate = N-acetyl-L-glutamate + L-ornithine. It carries out the reaction L-glutamate + acetyl-CoA = N-acetyl-L-glutamate + CoA + H(+). The protein operates within amino-acid biosynthesis; L-arginine biosynthesis; L-ornithine and N-acetyl-L-glutamate from L-glutamate and N(2)-acetyl-L-ornithine (cyclic): step 1/1. Its pathway is amino-acid biosynthesis; L-arginine biosynthesis; N(2)-acetyl-L-ornithine from L-glutamate: step 1/4. Functionally, catalyzes two activities which are involved in the cyclic version of arginine biosynthesis: the synthesis of N-acetylglutamate from glutamate and acetyl-CoA as the acetyl donor, and of ornithine by transacetylation between N(2)-acetylornithine and glutamate. The polypeptide is Arginine biosynthesis bifunctional protein ArgJ (Brucella melitensis biotype 1 (strain ATCC 23456 / CCUG 17765 / NCTC 10094 / 16M)).